A 613-amino-acid chain; its full sequence is DNA polymerase II small subunit (613 aa).

This sequence belongs to the DNA polymerase delta/II small subunit family. Heterodimer of a large subunit and a small subunit.

The enzyme catalyses DNA(n) + a 2'-deoxyribonucleoside 5'-triphosphate = DNA(n+1) + diphosphate. The catalysed reaction is Exonucleolytic cleavage in the 3'- to 5'-direction to yield nucleoside 5'-phosphates.. In terms of biological role, possesses two activities: a DNA synthesis (polymerase) and an exonucleolytic activity that degrades single-stranded DNA in the 3' to 5' direction. Has a template-primer preference which is characteristic of a replicative DNA polymerase. This is DNA polymerase II small subunit (polB) from Pyrococcus furiosus (strain ATCC 43587 / DSM 3638 / JCM 8422 / Vc1).